Consider the following 562-residue polypeptide: Protein FAM83D-A (562 aa).

Positions 424-471 (ITTQTTETSQCTTQTPAPTSSVARLSNSSNSSSSSFSSTSITSTGSNC) are disordered. Residues 425–471 (TTQTTETSQCTTQTPAPTSSVARLSNSSNSSSSSFSSTSITSTGSNC) show a composition bias toward low complexity.

It belongs to the FAM83 family.

The protein resides in the cytoplasm. The protein localises to the cytoskeleton. It is found in the spindle. Its subcellular location is the spindle pole. May regulate cell proliferation, growth, migration and epithelial to mesenchymal transition. May also be important for proper chromosome congression and alignment during mitosis. This is Protein FAM83D-A from Xenopus laevis (African clawed frog).